Here is a 310-residue protein sequence, read N- to C-terminus: Olfactory receptor 8B12 (310 aa).

Residues 1-24 (MAAKNSSVTEFILEGLTHQPGLRI) are Extracellular-facing. The N-linked (GlcNAc...) asparagine glycan is linked to Asn5. The helical transmembrane segment at 25-45 (PLFFLFLGFYTVTVVGNLGLI) threads the bilayer. At 46-53 (TLIGLNSH) the chain is on the cytoplasmic side. The helical transmembrane segment at 54–74 (LHTPMYFFLFNLSLIDFCFST) threads the bilayer. The Extracellular segment spans residues 75–98 (TITPKMLMSFVSRKNIISFTGCMT). The cysteines at positions 96 and 188 are disulfide-linked. Residues 99 to 119 (QLFFFCFFVVSESFILSAMAY) traverse the membrane as a helical segment. Over 120 to 138 (DRYVAICNPLLYTVTMSCQ) the chain is Cytoplasmic. The helical transmembrane segment at 139–159 (VCLLLLLGAYGMGFAGAMAHT) threads the bilayer. The Extracellular portion of the chain corresponds to 160 to 196 (GSIMNLTFCADNLVNHFMCDILPLLELSCNSSYMNEL). N-linked (GlcNAc...) asparagine glycosylation is found at Asn164 and Asn189. Residues 197 to 216 (VVFIVVAVDVGMPIVTVFIS) traverse the membrane as a helical segment. Topologically, residues 217–236 (YALILSSILHNSSTEGRSKA) are cytoplasmic. The helical transmembrane segment at 237-257 (FSTCSSHIIVVSLFFGSGAFM) threads the bilayer. Residues 258-270 (YLKPLSILPLEQG) are Extracellular-facing. Residues 271–291 (KVSSLFYTIIVPVLNPLIYSL) form a helical membrane-spanning segment. Residues 292-310 (RNKDVKVALRRTLGRKIFS) are Cytoplasmic-facing.

The protein belongs to the G-protein coupled receptor 1 family.

The protein resides in the cell membrane. Odorant receptor. The chain is Olfactory receptor 8B12 (OR8B12) from Homo sapiens (Human).